The primary structure comprises 313 residues: DNA-directed RNA polymerase subunit alpha (313 aa).

Residues 1-229 (MNSSNLLMEC…NLFKSIGEQK (229 aa)) form an alpha N-terminal domain (alpha-NTD) region. An alpha C-terminal domain (alpha-CTD) region spans residues 243–313 (IKPIDPYTHI…LKNKLGIVLK (71 aa)).

It belongs to the RNA polymerase alpha chain family. In plastids the minimal PEP RNA polymerase catalytic core is composed of four subunits: alpha, beta, beta', and beta''. When a (nuclear-encoded) sigma factor is associated with the core the holoenzyme is formed, which can initiate transcription.

It localises to the plastid. The protein resides in the chloroplast. It carries out the reaction RNA(n) + a ribonucleoside 5'-triphosphate = RNA(n+1) + diphosphate. DNA-dependent RNA polymerase catalyzes the transcription of DNA into RNA using the four ribonucleoside triphosphates as substrates. This is DNA-directed RNA polymerase subunit alpha from Thalassiosira pseudonana (Marine diatom).